We begin with the raw amino-acid sequence, 461 residues long: Putative cytochrome P450 132 (461 aa).

Residue Cys-409 participates in heme binding.

This sequence belongs to the cytochrome P450 family. Requires heme as cofactor.

The protein is Putative cytochrome P450 132 (cyp132) of Mycobacterium tuberculosis (strain ATCC 25618 / H37Rv).